Here is a 406-residue protein sequence, read N- to C-terminus: Probable tRNA sulfurtransferase (406 aa).

Positions 60–162 constitute a THUMP domain; that stretch reads PEAKARLQDT…PGAALLEVER (103 aa). ATP-binding positions include 180-181, 205-206, Arg-262, Gly-284, and Gln-293; these read LL and HF.

It belongs to the ThiI family.

Its subcellular location is the cytoplasm. It catalyses the reaction [ThiI sulfur-carrier protein]-S-sulfanyl-L-cysteine + a uridine in tRNA + 2 reduced [2Fe-2S]-[ferredoxin] + ATP + H(+) = [ThiI sulfur-carrier protein]-L-cysteine + a 4-thiouridine in tRNA + 2 oxidized [2Fe-2S]-[ferredoxin] + AMP + diphosphate. The enzyme catalyses [ThiS sulfur-carrier protein]-C-terminal Gly-Gly-AMP + S-sulfanyl-L-cysteinyl-[cysteine desulfurase] + AH2 = [ThiS sulfur-carrier protein]-C-terminal-Gly-aminoethanethioate + L-cysteinyl-[cysteine desulfurase] + A + AMP + 2 H(+). It functions in the pathway cofactor biosynthesis; thiamine diphosphate biosynthesis. Its function is as follows. Catalyzes the ATP-dependent transfer of a sulfur to tRNA to produce 4-thiouridine in position 8 of tRNAs, which functions as a near-UV photosensor. Also catalyzes the transfer of sulfur to the sulfur carrier protein ThiS, forming ThiS-thiocarboxylate. This is a step in the synthesis of thiazole, in the thiamine biosynthesis pathway. The sulfur is donated as persulfide by IscS. This chain is Probable tRNA sulfurtransferase, found in Thermus thermophilus (strain ATCC 27634 / DSM 579 / HB8).